The chain runs to 661 residues: Sperm transmembrane protein 9 (661 aa).

The N-terminal stretch at 1 to 16 (MNVILVLVVLFFAGDC) is a signal peptide. Residues 17–618 (AKIRKIIDFL…MTNRLMKNYE (602 aa)) lie on the Extracellular side of the membrane. Residues 52-90 (NFNPCLENPKICSNRGKCLHENGNFYCICPVTHYGKTCE) enclose the EGF-like 1 domain. Cystine bridges form between cysteine 56–cysteine 69, cysteine 63–cysteine 78, and cysteine 80–cysteine 89. N-linked (GlcNAc...) asparagine glycosylation is found at asparagine 105, asparagine 106, asparagine 134, and asparagine 190. Positions 210–259 (QISACFDTQCDNGGICEDVVDWKTKTVTATCKCPSAIELIGGTVTGENCE) constitute an EGF-like 2 domain. 3 cysteine pairs are disulfide-bonded: cysteine 214–cysteine 225, cysteine 219–cysteine 240, and cysteine 242–cysteine 258. 4 N-linked (GlcNAc...) asparagine glycosylation sites follow: asparagine 279, asparagine 290, asparagine 316, and asparagine 338. The short motif at 377–379 (RGD) is the Cell attachment site element. EGF-like domains are found at residues 377-414 (RGDRWDEKCTDSQHGACVDISGVAHCVCKPDYTGEKCE), 519-557 (HTNPCYQNLCQNSATCHIDPKQRSYDCQCVNGTRGSLCE), and 559-600 (VDDS…LDCN). 9 cysteine pairs are disulfide-bonded: cysteine 385–cysteine 402, cysteine 393–cysteine 404, cysteine 413–cysteine 419, cysteine 523–cysteine 534, cysteine 528–cysteine 545, cysteine 547–cysteine 556, cysteine 563–cysteine 576, cysteine 571–cysteine 588, and cysteine 590–cysteine 599. The N-linked (GlcNAc...) asparagine glycan is linked to asparagine 549. A helical membrane pass occupies residues 619-639 (FSLPLVACFVSLAILLPVIVI). The Cytoplasmic portion of the chain corresponds to 640–661 (SRRRQGRVEEAKKTSEVKTENP).

In terms of tissue distribution, expressed in spermatids, during spermogenesis expression is primarily localized to the pseudopod.

It is found in the cytoplasm. The protein resides in the membrane. In terms of biological role, required for fertilization. May be required for cell adhesion and/or function as a signaling molecule. The protein is Sperm transmembrane protein 9 (spe-9) of Caenorhabditis elegans.